Consider the following 504-residue polypeptide: Protein FMP42 (504 aa).

The Vacuolar segment spans residues 1–11 (MTSTRTLRYAQ). A helical membrane pass occupies residues 12 to 32 (VACACIWCLFSAGIIFGFAAL). Over 33–64 (KPILISEGVYHELCDPKDGDRLLCTAQDLKLN) the chain is Cytoplasmic. The chain crosses the membrane as a helical span at residues 65-85 (FIFALSATVTNIMALPVGKIL). Over 86 to 91 (DMYGPR) the chain is Vacuolar. Residues 92 to 112 (VCGIIGSCLLFLASGNFISAK) traverse the membrane as a helical segment. Topologically, residues 113–119 (HLVSLWD) are cytoplasmic. Residues 120–140 (PYLVGYTLLAVAGPFVFISCF) traverse the membrane as a helical segment. The Vacuolar segment spans residues 141-150 (QLANSFPQRS). The chain crosses the membrane as a helical span at residues 151–171 (GTVLALLTGSFDSSSALFLLY). Topologically, residues 172–186 (RLLYQNWFPTLNVSR) are cytoplasmic. Residues 187-207 (FFTLYLIVPVFILACQLTIMP) traverse the membrane as a helical segment. The Vacuolar segment spans residues 208–302 (HSSYKTVNHI…KSAYEQIKSP (95 aa)). 3 positions are modified to phosphoserine: Ser238, Ser249, and Ser269. The chain crosses the membrane as a helical span at residues 303-323 (WFYLMLLFALVAMLRINYFIA). Topologically, residues 324 to 344 (TVRTQEEYLLNDPDLALKLNS) are cytoplasmic. Residues 345–365 (IFDMLLPLGGAVSIPFIGLLL) traverse the membrane as a helical segment. At 366–385 (DHTDTLSTLTILFTTSTAIG) the chain is on the vacuolar side. The chain crosses the membrane as a helical span at residues 386-406 (VFGLIPNSFTWNLIGIVLLVV). The Cytoplasmic portion of the chain corresponds to 407–421 (YRPFYYTVVSDYSSK). Residues 422–442 (VFGFDTFGTVYGLLSCICGIF) form a helical membrane-spanning segment. The Vacuolar portion of the chain corresponds to 443-462 (NMSQNLLDKWTHTTFNMNPF). Residues 463-483 (PINLTLVILTVVFSLTLTFYI) traverse the membrane as a helical segment. Residues 484 to 504 (RSQILPKPVNERGLSSNYQTI) are Cytoplasmic-facing.

This sequence belongs to the SLC43A transporter (TC 2.A.1.44) family.

It localises to the vacuole membrane. The chain is Protein FMP42 (FMP42) from Saccharomyces cerevisiae (strain ATCC 204508 / S288c) (Baker's yeast).